The following is a 394-amino-acid chain: Exodeoxyribonuclease 7 large subunit (394 aa).

This sequence belongs to the XseA family. In terms of assembly, heterooligomer composed of large and small subunits.

Its subcellular location is the cytoplasm. It carries out the reaction Exonucleolytic cleavage in either 5'- to 3'- or 3'- to 5'-direction to yield nucleoside 5'-phosphates.. In terms of biological role, bidirectionally degrades single-stranded DNA into large acid-insoluble oligonucleotides, which are then degraded further into small acid-soluble oligonucleotides. This Thermotoga sp. (strain RQ2) protein is Exodeoxyribonuclease 7 large subunit.